A 201-amino-acid polypeptide reads, in one-letter code: Thioredoxin reductase-like selenoprotein T (201 aa).

An N-terminal signal peptide occupies residues 1-26 (MARSSGPLCLLLLGGLVAGILSGASA). The segment at residues 51–54 (CVSU) is a cross-link (cysteinyl-selenocysteine (Cys-Sec)). A non-standard amino acid (selenocysteine) is located at residue U54. Residues 96–116 (VFKLVLIGLIIAGKDPFAFFG) form a helical membrane-spanning segment.

Belongs to the SelWTH family. Selenoprotein T subfamily. May contain a selenide-sulfide bond between Cys-51 and Sec-54. This bond is speculated to serve as redox-active pair.

The protein resides in the endoplasmic reticulum membrane. It carries out the reaction [thioredoxin]-dithiol + NADP(+) = [thioredoxin]-disulfide + NADPH + H(+). In terms of biological role, selenoprotein with thioredoxin reductase-like oxidoreductase activity. This chain is Thioredoxin reductase-like selenoprotein T (selenot), found in Xenopus tropicalis (Western clawed frog).